Here is a 357-residue protein sequence, read N- to C-terminus: DNA integrity scanning protein DisA (357 aa).

The DAC domain maps to 8–146 (VKSMINILQL…GNLRYTLKDI (139 aa)). ATP-binding positions include G75, L93, and 106–110 (MRHRT).

This sequence belongs to the DisA family. Homooctamer. The cofactor is Mg(2+).

The catalysed reaction is 2 ATP = 3',3'-c-di-AMP + 2 diphosphate. Participates in a DNA-damage check-point that is active prior to asymmetric division when DNA is damaged. DisA forms globular foci that rapidly scan along the chromosomes during sporulation, searching for lesions. When a lesion is present, DisA pauses at the lesion site. This triggers a cellular response that culminates in a temporary block in sporulation initiation. In terms of biological role, also has diadenylate cyclase activity, catalyzing the condensation of 2 ATP molecules into cyclic di-AMP (c-di-AMP). c-di-AMP acts as a signaling molecule that couples DNA integrity with progression of sporulation. The rise in c-di-AMP level generated by DisA while scanning the chromosome, operates as a positive signal that advances sporulation; upon encountering a lesion, the DisA focus arrests at the damaged site and halts c-di-AMP synthesis. This is DNA integrity scanning protein DisA from Bacillus mycoides (strain KBAB4) (Bacillus weihenstephanensis).